A 461-amino-acid chain; its full sequence is MLKIFNTLTRQKEEFKPIHAGEVGMYVCGITVYDLCHIGHGRTFVAFDVVARYLRFLGYKLKYVRNITDIDDKIIKRANENGESFVALVDRMIAEMHKDFDALNILRPDMEPRATHHIAEIIELTEQLIAKGHAYVADNGDVMFDVPTDPTYGVLSRQDLDQLQAGARVDVVDDKRNPMDFVLWKMSKEGEPSWPSPWGPGRPGWHIECSAMNCKQLGNHFDIHGGGSDLMFPHHENEIAQSTCAHDGQYVNYWMHSGMVMVDREKMSKSLGNFFTVRDVLKYYDAETVRYFLMSGHYRSQLNYSEENLKQARAALERLYTALRGTDKTVAPAGGEAFEARFIEAMDDDFNTPEAYSVLFDMAREVNRLKAEDMAAANAMASHLRKLSSVLGLLEQEPEAFLQSGAQADDSEVAEIEALIQQRLDARKAKDWAAADAARDRLNEMGIVLEDGPQGTTWRRK.

Cys-28 contributes to the Zn(2+) binding site. Residues 30–40 carry the 'HIGH' region motif; it reads ITVYDLCHIGH. Positions 209, 234, and 238 each coordinate Zn(2+). The 'KMSKS' region motif lies at 266 to 270; the sequence is KMSKS. Lys-269 is an ATP binding site.

The protein belongs to the class-I aminoacyl-tRNA synthetase family. Monomer. Zn(2+) serves as cofactor.

The protein localises to the cytoplasm. It catalyses the reaction tRNA(Cys) + L-cysteine + ATP = L-cysteinyl-tRNA(Cys) + AMP + diphosphate. This chain is Cysteine--tRNA ligase, found in Escherichia coli O17:K52:H18 (strain UMN026 / ExPEC).